The primary structure comprises 323 residues: Probable cell division protein WhiA (323 aa).

The H-T-H motif DNA-binding region spans threonine 275–serine 309.

It belongs to the WhiA family.

In terms of biological role, involved in cell division and chromosome segregation. This is Probable cell division protein WhiA from Listeria monocytogenes serotype 4a (strain HCC23).